The following is a 564-amino-acid chain: Kelch repeat and BTB domain-containing protein 1 (564 aa).

One can recognise a BTB domain in the interval 21–88 (CDINIVINDE…IYGIPLSLTN (68 aa)). One can recognise a BACK domain in the interval 123 to 219 (CIDFYIYADK…SLLSPQVIKS (97 aa)). 6 Kelch repeats span residues 252–297 (IELI…VLDN), 298–346 (IIYM…ADDE), 347–395 (YIYC…MLNG), 397–441 (IYVI…VHDG), 442–492 (KIYI…SAHN), and 494–539 (LYVG…CEPI).

Interacts (via BTB domain) with host CUL3.

The protein resides in the host cytoplasm. Its function is as follows. Probable substrate-specific adapter of CUL3-containing E3 ubiquitin-protein ligases which mediate the ubiquitination and subsequent proteasomal degradation of host target proteins. In Cowpox virus (strain GRI-90 / Grishak) (CPV), this protein is Kelch repeat and BTB domain-containing protein 1 (KBTB1).